The primary structure comprises 321 residues: tRNA 2-thiolation protein NcsA (321 aa).

Residue K204 forms a Glycyl lysine isopeptide (Lys-Gly) (interchain with G-Cter in SAMP2) linkage.

It belongs to the TtcA family. CTU1/NCS6/ATPBD3 subfamily. As to quaternary structure, interacts with monomeric and polymeric forms of SAMP2. Interacts with UbaA. Interacts with archaeal EF-1-alpha and Pan1. Non-sampylated protein forms a complex with archaeal CPSF1 of approximately 100 kDa. In terms of processing, sampylated at Lys-204 with the archaeal ubiquitin-like protein SAMP2. Polymeric chains of SAMP2 are also linked.

The protein operates within tRNA modification; 5-methoxycarbonylmethyl-2-thiouridine-tRNA biosynthesis. Functionally, required for thiolation of mcm(5)S(2)U at the wobble uridine position of tRNA specific for lysine (tRNA(Lys)). Probably acts by catalyzing adenylation of tRNA, an intermediate required for 2-thiolation. May also act as a sulfurtransferase that transfers sulfur from thiocarboxylated SAMP2 onto the uridine of tRNA at wobble position. Required for cell growth at elevated temperatures. In Haloferax volcanii (strain ATCC 29605 / DSM 3757 / JCM 8879 / NBRC 14742 / NCIMB 2012 / VKM B-1768 / DS2) (Halobacterium volcanii), this protein is tRNA 2-thiolation protein NcsA.